A 561-amino-acid polypeptide reads, in one-letter code: Putative transport protein KPK_3686 (561 aa).

A run of 5 helical transmembrane segments spans residues 8–28 (LLNG…LCLG), 37–57 (LGNS…HFAI), 66–86 (FMLF…SIFF), 94–114 (MLAL…GKVF), and 158–178 (HLSL…IVGA). RCK C-terminal domains follow at residues 202–288 (LDTD…SFRN) and 292–373 (VFDR…RIGF). 5 helical membrane-spanning segments follow: residues 383 to 403 (LLAF…TFQF), 406 to 426 (FSFG…LGFL), 447 to 467 (FGLM…INNG), 478 to 498 (AGLI…AYVL), and 540 to 560 (AIAN…WPGL).

The protein belongs to the AAE transporter (TC 2.A.81) family. YbjL subfamily.

The protein localises to the cell membrane. This is Putative transport protein KPK_3686 from Klebsiella pneumoniae (strain 342).